Consider the following 197-residue polypeptide: dTTP/UTP pyrophosphatase (197 aa).

Asp70 acts as the Proton acceptor in catalysis.

This sequence belongs to the Maf family. YhdE subfamily. It depends on a divalent metal cation as a cofactor.

The protein resides in the cytoplasm. It carries out the reaction dTTP + H2O = dTMP + diphosphate + H(+). It catalyses the reaction UTP + H2O = UMP + diphosphate + H(+). Nucleoside triphosphate pyrophosphatase that hydrolyzes dTTP and UTP. May have a dual role in cell division arrest and in preventing the incorporation of modified nucleotides into cellular nucleic acids. The polypeptide is dTTP/UTP pyrophosphatase (yceF2) (Salmonella choleraesuis (strain SC-B67)).